The chain runs to 438 residues: Transposon Ty2-LR1 Gag polyprotein (438 aa).

Polar residues-rich tracts occupy residues 1–11 (MESQQLHQNPH), 19–39 (ASVT…SASN), and 49–60 (KVNSQQETTPGT). 3 disordered regions span residues 1-86 (MESQ…GQYQ), 364-397 (KNVS…AKAH), and 419-438 (SSQY…TERI). Residues 295-397 (ENNINVSDRL…SSKPRAAKAH (103 aa)) are RNA-binding. Positions 369-381 (TSPNTTNTKVTTR) are enriched in low complexity.

Homotrimer.

The protein localises to the cytoplasm. Its function is as follows. Capsid protein (CA) is the structural component of the virus-like particle (VLP), forming the shell that encapsulates the retrotransposons dimeric RNA genome. The particles are assembled from trimer-clustered units and there are holes in the capsid shells that allow for the diffusion of macromolecules. CA also has nucleocapsid-like chaperone activity, promoting primer tRNA(i)-Met annealing to the multipartite primer-binding site (PBS), dimerization of Ty2 RNA and initiation of reverse transcription. This chain is Transposon Ty2-LR1 Gag polyprotein (TY2A-LR1), found in Saccharomyces cerevisiae (strain ATCC 204508 / S288c) (Baker's yeast).